Reading from the N-terminus, the 341-residue chain is Dihydroorotate dehydrogenase (quinone) (341 aa).

FMN is bound by residues Ala-61 to Lys-65 and Thr-85. Residue Lys-65 participates in substrate binding. Asn-110 to Phe-114 is a substrate binding site. FMN-binding residues include Asn-138 and Asn-171. Asn-171 is a substrate binding site. Catalysis depends on Ser-174, which acts as the Nucleophile. Residue Asn-176 coordinates substrate. The FMN site is built by Lys-216 and Thr-244. Asn-245–Thr-246 provides a ligand contact to substrate. Residues Gly-267, Gly-296, and Tyr-317 to Ser-318 each bind FMN.

Belongs to the dihydroorotate dehydrogenase family. Type 2 subfamily. In terms of assembly, monomer. It depends on FMN as a cofactor.

The protein localises to the cell membrane. It carries out the reaction (S)-dihydroorotate + a quinone = orotate + a quinol. The protein operates within pyrimidine metabolism; UMP biosynthesis via de novo pathway; orotate from (S)-dihydroorotate (quinone route): step 1/1. Catalyzes the conversion of dihydroorotate to orotate with quinone as electron acceptor. The polypeptide is Dihydroorotate dehydrogenase (quinone) (Pseudomonas putida (strain W619)).